Here is a 130-residue protein sequence, read N- to C-terminus: Cystatin (130 aa).

Residues 1 to 19 (MEWKIVVPLLAVAFTVANA) form the signal peptide. Residues 67–71 (QVVSG) carry the Secondary area of contact motif. Cystine bridges form between Cys-85/Cys-94 and Cys-108/Cys-128.

Belongs to the cystatin family. As to expression, ubiquitous expression including brain, white muscle, heart, gill, kidney, spleen, liver and skin with the highest and lowest level in brain and gill, respectively.

Its subcellular location is the secreted. Its function is as follows. Cysteine proteinase inhibitor. The protein is Cystatin of Oncorhynchus keta (Chum salmon).